Here is a 71-residue protein sequence, read N- to C-terminus: MAPPTKILGLDTQQRMLQRGENCSLKSLVQNECAFNGNDYVCTPFKRLFEQCMVKDGRVLNIEVTNLNTNR.

Its subcellular location is the mitochondrion inner membrane. In terms of biological role, required for mitochondrial inner membrane peptidase function. The chain is Protein SOM1, mitochondrial (SOM1) from Kluyveromyces lactis (strain ATCC 8585 / CBS 2359 / DSM 70799 / NBRC 1267 / NRRL Y-1140 / WM37) (Yeast).